The chain runs to 343 residues: Aspartate carbamoyltransferase catalytic subunit (343 aa).

The carbamoyl phosphate site is built by Arg91 and Thr92. Lys119 serves as a coordination point for L-aspartate. Carbamoyl phosphate contacts are provided by Arg141, His171, and Gln174. L-aspartate contacts are provided by Arg204 and Arg259. Positions 300 and 301 each coordinate carbamoyl phosphate.

The protein belongs to the aspartate/ornithine carbamoyltransferase superfamily. ATCase family. In terms of assembly, heterododecamer (2C3:3R2) of six catalytic PyrB chains organized as two trimers (C3), and six regulatory PyrI chains organized as three dimers (R2).

The catalysed reaction is carbamoyl phosphate + L-aspartate = N-carbamoyl-L-aspartate + phosphate + H(+). It functions in the pathway pyrimidine metabolism; UMP biosynthesis via de novo pathway; (S)-dihydroorotate from bicarbonate: step 2/3. Its function is as follows. Catalyzes the condensation of carbamoyl phosphate and aspartate to form carbamoyl aspartate and inorganic phosphate, the committed step in the de novo pyrimidine nucleotide biosynthesis pathway. In Burkholderia mallei (strain NCTC 10247), this protein is Aspartate carbamoyltransferase catalytic subunit.